Consider the following 308-residue polypeptide: Extended-spectrum beta-lactamase PER-1 (308 aa).

The N-terminal stretch at 1-26 (MNVIIKAVVTASTLLMVSFSSFETSA) is a signal peptide. The Nucleophile; acyl-ester intermediate role is filled by Ser71. The a beta-lactam site is built by Lys74, Ser135, and Glu171.

Belongs to the class-A beta-lactamase family. In terms of assembly, monomer.

It is found in the secreted. The catalysed reaction is a beta-lactam + H2O = a substituted beta-amino acid. With respect to regulation, inhibited by the beta-lactamase-blocking agents clavulanic acid, tazobactam and sulbactam. Not inhibited by EDTA. Functionally, extended-spectrum beta-lactamase (ESBL) which confers resistance to penicillins, as well as first-, second- and third-generation cephalosporins, but not the carbapenem, imipenem, in the JM109 strain of E.coli. Has cefotaxime-hydrolyzing activity. This chain is Extended-spectrum beta-lactamase PER-1, found in Pseudomonas aeruginosa.